The primary structure comprises 22 residues: Caerin-3.4 (22 aa).

Lysine amide is present on Lys-22.

Expressed by the skin parotoid and/or rostral glands.

It is found in the secreted. Functionally, antibacterial peptide, that adopts an alpha helical conformation which can disrupt bacterial membranes. Each caerin displays a different antimicrobial specificity. The sequence is that of Caerin-3.4 from Ranoidea caerulea (Green tree frog).